The primary structure comprises 61 residues: Small ribosomal subunit protein uS14 (61 aa).

Positions 24, 27, 40, and 43 each coordinate Zn(2+).

The protein belongs to the universal ribosomal protein uS14 family. Zinc-binding uS14 subfamily. As to quaternary structure, part of the 30S ribosomal subunit. Contacts proteins S3 and S10. The cofactor is Zn(2+).

Binds 16S rRNA, required for the assembly of 30S particles and may also be responsible for determining the conformation of the 16S rRNA at the A site. This Syntrophotalea carbinolica (strain DSM 2380 / NBRC 103641 / GraBd1) (Pelobacter carbinolicus) protein is Small ribosomal subunit protein uS14.